Here is a 169-residue protein sequence, read N- to C-terminus: Lipoprotein signal peptidase (169 aa).

Over 1 to 9 the chain is Cytoplasmic; that stretch reads MPDVDRFGR. A helical transmembrane segment spans residues 10–30; sequence LPWLWITVLVFVLDQVSKAFF. The Periplasmic portion of the chain corresponds to 31–67; that stretch reads QAELSMYQQIVVIPDLFSWTLAYNTGAAFSFLADSSG. A helical membrane pass occupies residues 68–89; that stretch reads WQRWLFALIAIVVSASLVVWLK. The Cytoplasmic portion of the chain corresponds to 90–96; sequence RLKKGET. Residues 97–118 form a helical membrane-spanning segment; that stretch reads WLAIALALVLGGALGNLYDRMV. The Periplasmic portion of the chain corresponds to 119–140; the sequence is LGHVVDFILVHWQNRWYFPAFN. Residues D124 and D143 contribute to the active site. Residues 141–154 traverse the membrane as a helical segment; the sequence is LADSAITVGAVMLA. The Cytoplasmic segment spans residues 155 to 169; it reads LDMFRSKKSGEAAHG.

It belongs to the peptidase A8 family. As to quaternary structure, monomer in the crystal.

The protein localises to the cell inner membrane. It carries out the reaction Release of signal peptides from bacterial membrane prolipoproteins. Hydrolyzes -Xaa-Yaa-Zaa-|-(S,diacylglyceryl)Cys-, in which Xaa is hydrophobic (preferably Leu), and Yaa (Ala or Ser) and Zaa (Gly or Ala) have small, neutral side chains.. It participates in protein modification; lipoprotein biosynthesis (signal peptide cleavage). With respect to regulation, inhibited by globomycin. Its function is as follows. This protein specifically catalyzes the removal of signal peptides from prolipoproteins. The chain is Lipoprotein signal peptidase from Pseudomonas aeruginosa (strain ATCC 15692 / DSM 22644 / CIP 104116 / JCM 14847 / LMG 12228 / 1C / PRS 101 / PAO1).